A 155-amino-acid chain; its full sequence is DNA gyrase inhibitor (155 aa).

This sequence belongs to the DNA gyrase inhibitor family. As to quaternary structure, interacts with DNA gyrase.

Its subcellular location is the cytoplasm. Inhibits the supercoiling activity of DNA gyrase. Acts by inhibiting DNA gyrase at an early step, prior to (or at the step of) binding of DNA by the gyrase. It protects cells against toxins that target DNA gyrase, by inhibiting activity of these toxins and reducing the formation of lethal double-strand breaks in the cell. In Erwinia billingiae (strain Eb661), this protein is DNA gyrase inhibitor.